The sequence spans 920 residues: 2-oxoadipate dehydrogenase complex component E1 (920 aa).

2 positions are modified to N6-succinyllysine: lysine 183 and lysine 188. The interval 299–318 is disordered; sequence GKTRGRQQSQEDGDYSPNGS. An N6-succinyllysine mark is found at lysine 800 and lysine 818.

Belongs to the alpha-ketoglutarate dehydrogenase family. The 2-oxoadipate dehydrogenase complex is composed of OADH (2-oxoadipate dehydrogenase; E1a), DLST (dihydrolipoamide succinyltransferase; E2) and DLD (dihydrolipoamide dehydrogenase; E3). E1a functional unit is a dimer. Thiamine diphosphate serves as cofactor.

The protein resides in the mitochondrion. The catalysed reaction is N(6)-[(R)-lipoyl]-L-lysyl-[protein] + 2-oxoadipate + H(+) = N(6)-[(R)-S(8)-glutaryldihydrolipoyl]-L-lysyl-[protein] + CO2. It participates in amino-acid degradation. 2-oxoadipate dehydrogenase (E1a) component of the 2-oxoadipate dehydrogenase complex (OADHC). Participates in the first step, rate limiting for the overall conversion of 2-oxoadipate (alpha-ketoadipate) to glutaryl-CoA and CO(2) catalyzed by the whole OADHC. Catalyzes the irreversible decarboxylation of 2-oxoadipate via the thiamine diphosphate (ThDP) cofactor and subsequent transfer of the decarboxylated acyl intermediate on an oxidized dihydrolipoyl group that is covalently amidated to the E2 enzyme (dihydrolipoyllysine-residue succinyltransferase or DLST). Can catalyze the decarboxylation of 2-oxoglutarate in vitro, but at a much lower rate than 2-oxoadipate. Responsible for the last step of L-lysine, L-hydroxylysine and L-tryptophan catabolism with the common product being 2-oxoadipate. This Rattus norvegicus (Rat) protein is 2-oxoadipate dehydrogenase complex component E1 (Dhtkd1).